A 249-amino-acid chain; its full sequence is NADH dehydrogenase [ubiquinone] flavoprotein 2, mitochondrial (249 aa).

The N-terminal 32 residues, 1–32 (MFFSAALRARAAGLTAQWGRHVRNLHKTAMQN), are a transit peptide targeting the mitochondrion. K61 is subject to N6-acetyllysine. 4 residues coordinate [2Fe-2S] cluster: C135, C140, C176, and C180. A Phosphotyrosine; by SRC modification is found at Y193. Residues 213–249 (IPKPGPRSGRFSCEPAGGLTSLTEPPKGPGFGVQAGL) form a disordered region.

This sequence belongs to the complex I 24 kDa subunit family. In terms of assembly, core subunit of respiratory chain NADH dehydrogenase (Complex I) which is composed of 45 different subunits. This is a component of the flavoprotein-sulfur (FP) fragment of the enzyme. [2Fe-2S] cluster serves as cofactor.

It is found in the mitochondrion inner membrane. The catalysed reaction is a ubiquinone + NADH + 5 H(+)(in) = a ubiquinol + NAD(+) + 4 H(+)(out). Core subunit of the mitochondrial membrane respiratory chain NADH dehydrogenase (Complex I) which catalyzes electron transfer from NADH through the respiratory chain, using ubiquinone as an electron acceptor. Parts of the peripheral arm of the enzyme, where the electrons from NADH are accepted by flavin mononucleotide (FMN) and then passed along a chain of iron-sulfur clusters by electron tunnelling to the final acceptor ubiquinone. Contains one iron-sulfur cluster. In Gorilla gorilla gorilla (Western lowland gorilla), this protein is NADH dehydrogenase [ubiquinone] flavoprotein 2, mitochondrial.